The primary structure comprises 141 residues: ATP synthase F(0) complex subunit C3, mitochondrial (141 aa).

Residues 1–66 (MFACAKLART…REFQTSVISR (66 aa)) constitute a mitochondrion transit peptide. Residues 82-102 (VGVAGSGAGIGTVFGSLIIGY) form a helical membrane-spanning segment. At K109 the chain carries N6,N6,N6-trimethyllysine. Residues 117 to 137 (ILGFALSEAMGLFCLMVAFLI) form a helical membrane-spanning segment.

The protein belongs to the ATPase C chain family. In terms of assembly, F-type ATPases have 2 components, CF(1) - the catalytic core - and CF(0) - the membrane proton channel. CF(1) has five subunits: alpha(3), beta(3), gamma(1), delta(1), epsilon(1). CF(0) has three main subunits: a, b and c. Interacts with TMEM70 and TMEM242. Post-translationally, trimethylated by ATPSCKMT at Lys-109. Methylation is required for proper incorporation of the C subunit into the ATP synthase complex and mitochondrial respiration.

It localises to the mitochondrion membrane. Functionally, mitochondrial membrane ATP synthase (F(1)F(0) ATP synthase or Complex V) produces ATP from ADP in the presence of a proton gradient across the membrane which is generated by electron transport complexes of the respiratory chain. F-type ATPases consist of two structural domains, F(1) - containing the extramembraneous catalytic core and F(0) - containing the membrane proton channel, linked together by a central stalk and a peripheral stalk. During catalysis, ATP synthesis in the catalytic domain of F(1) is coupled via a rotary mechanism of the central stalk subunits to proton translocation. Part of the complex F(0) domain. A homomeric c-ring of probably 10 subunits is part of the complex rotary element. This Mus musculus (Mouse) protein is ATP synthase F(0) complex subunit C3, mitochondrial.